A 185-amino-acid polypeptide reads, in one-letter code: Ribosome-recycling factor (185 aa).

It belongs to the RRF family.

The protein localises to the cytoplasm. Responsible for the release of ribosomes from messenger RNA at the termination of protein biosynthesis. May increase the efficiency of translation by recycling ribosomes from one round of translation to another. This is Ribosome-recycling factor from Idiomarina loihiensis (strain ATCC BAA-735 / DSM 15497 / L2-TR).